A 595-amino-acid polypeptide reads, in one-letter code: Probable carotenoid cleavage dioxygenase 4, chloroplastic (595 aa).

The N-terminal 34 residues, 1-34 (MDSVSSSSFLSSTFSLHHSLLRRRSSSPTLLRIN), are a transit peptide targeting the chloroplast. Residues 41–74 (RSPITNPSDNNDRRNKPKTLHNRTNHTLVSSPPK) are disordered. Residues 55-64 (NKPKTLHNRT) show a composition bias toward basic residues. Fe cation contacts are provided by H287, H336, H404, and H583.

Belongs to the carotenoid oxygenase family. In terms of assembly, interacts with VAR3. Interacts with PGM48. The cofactor is Fe(2+). In terms of tissue distribution, mostly expressed in flowers (e.g. sepals and petals), siliques, seeds, leaves and cotyledons.

The protein localises to the plastid. It localises to the chloroplast. Its subcellular location is the plastoglobule. Its function is as follows. May be involved in carotenoid cleavage. The sequence is that of Probable carotenoid cleavage dioxygenase 4, chloroplastic (CCD4) from Arabidopsis thaliana (Mouse-ear cress).